The following is a 294-amino-acid chain: Cytidine deaminase (294 aa).

2 CMP/dCMP-type deaminase domains span residues 48–168 (DEDA…FGPK) and 186–294 (LTGD…TLLA). 89–91 (NME) is a binding site for substrate. Histidine 102 is a Zn(2+) binding site. The active-site Proton donor is glutamate 104. Residues cysteine 129 and cysteine 132 each contribute to the Zn(2+) site.

It belongs to the cytidine and deoxycytidylate deaminase family. In terms of assembly, homodimer. The cofactor is Zn(2+).

It carries out the reaction cytidine + H2O + H(+) = uridine + NH4(+). The catalysed reaction is 2'-deoxycytidine + H2O + H(+) = 2'-deoxyuridine + NH4(+). This enzyme scavenges exogenous and endogenous cytidine and 2'-deoxycytidine for UMP synthesis. The polypeptide is Cytidine deaminase (Enterobacter sp. (strain 638)).